A 418-amino-acid polypeptide reads, in one-letter code: Gamma-glutamyl phosphate reductase (418 aa).

The protein belongs to the gamma-glutamyl phosphate reductase family.

The protein localises to the cytoplasm. The enzyme catalyses L-glutamate 5-semialdehyde + phosphate + NADP(+) = L-glutamyl 5-phosphate + NADPH + H(+). The protein operates within amino-acid biosynthesis; L-proline biosynthesis; L-glutamate 5-semialdehyde from L-glutamate: step 2/2. In terms of biological role, catalyzes the NADPH-dependent reduction of L-glutamate 5-phosphate into L-glutamate 5-semialdehyde and phosphate. The product spontaneously undergoes cyclization to form 1-pyrroline-5-carboxylate. This is Gamma-glutamyl phosphate reductase from Histophilus somni (strain 2336) (Haemophilus somnus).